The following is a 286-amino-acid chain: Formyltetrahydrofolate deformylase (286 aa).

The region spanning 8–88 is the ACT domain; that stretch reads VLTLQCPEGI…MDWQLRERGQ (81 aa). Asp-230 is a catalytic residue.

This sequence belongs to the PurU family.

It catalyses the reaction (6R)-10-formyltetrahydrofolate + H2O = (6S)-5,6,7,8-tetrahydrofolate + formate + H(+). Its pathway is purine metabolism; IMP biosynthesis via de novo pathway; formate from 10-formyl-5,6,7,8-tetrahydrofolate: step 1/1. Catalyzes the hydrolysis of 10-formyltetrahydrofolate (formyl-FH4) to formate and tetrahydrofolate (FH4). This chain is Formyltetrahydrofolate deformylase, found in Corynebacterium sp. (strain P-1).